We begin with the raw amino-acid sequence, 71 residues long: Small ribosomal subunit protein bS21 (71 aa).

Residues 38-71 (YEKPTTVRKRAKAAAQKRHAKKLSRENARRVRLY) are disordered. Over residues 43–59 (TVRKRAKAAAQKRHAKK) the composition is skewed to basic residues. Residues 60–71 (LSRENARRVRLY) are compositionally biased toward basic and acidic residues.

Belongs to the bacterial ribosomal protein bS21 family.

In Aliivibrio fischeri (strain ATCC 700601 / ES114) (Vibrio fischeri), this protein is Small ribosomal subunit protein bS21.